Here is a 175-residue protein sequence, read N- to C-terminus: Cyclic pyranopterin monophosphate synthase (175 aa).

Substrate-binding positions include 78–80 (LCH) and 125–126 (ME). Aspartate 140 is an active-site residue.

The protein belongs to the MoaC family. Homohexamer; trimer of dimers.

The catalysed reaction is (8S)-3',8-cyclo-7,8-dihydroguanosine 5'-triphosphate = cyclic pyranopterin phosphate + diphosphate. The protein operates within cofactor biosynthesis; molybdopterin biosynthesis. Its function is as follows. Catalyzes the conversion of (8S)-3',8-cyclo-7,8-dihydroguanosine 5'-triphosphate to cyclic pyranopterin monophosphate (cPMP). The sequence is that of Cyclic pyranopterin monophosphate synthase from Rhodopirellula baltica (strain DSM 10527 / NCIMB 13988 / SH1).